Here is a 173-residue protein sequence, read N- to C-terminus: NADH-ubiquinone oxidoreductase chain 6 (173 aa).

The next 4 membrane-spanning stretches (helical) occupy residues 24-44, 47-67, 81-101, and 142-162; these read AMGLMLLIQTFLTSLLTGMFV, FWFSYVLFLIFMGGMLVLFIY, MKLFFLSLSMILMFIVFSFFF, and LITLLLINYLFLTLLVTVKIT.

The protein belongs to the complex I subunit 6 family.

Its subcellular location is the mitochondrion membrane. The enzyme catalyses a ubiquinone + NADH + 5 H(+)(in) = a ubiquinol + NAD(+) + 4 H(+)(out). In terms of biological role, core subunit of the mitochondrial membrane respiratory chain NADH dehydrogenase (Complex I) that is believed to belong to the minimal assembly required for catalysis. Complex I functions in the transfer of electrons from NADH to the respiratory chain. The immediate electron acceptor for the enzyme is believed to be ubiquinone. The chain is NADH-ubiquinone oxidoreductase chain 6 from Aedes aegypti (Yellowfever mosquito).